A 122-amino-acid chain; its full sequence is Small ribosomal subunit protein uS13 (122 aa).

The interval 94–122 (KQLPVRGQRTHTNARTRKGKAKPIAGKKK) is disordered.

This sequence belongs to the universal ribosomal protein uS13 family. In terms of assembly, part of the 30S ribosomal subunit. Forms a loose heterodimer with protein S19. Forms two bridges to the 50S subunit in the 70S ribosome.

Its function is as follows. Located at the top of the head of the 30S subunit, it contacts several helices of the 16S rRNA. In the 70S ribosome it contacts the 23S rRNA (bridge B1a) and protein L5 of the 50S subunit (bridge B1b), connecting the 2 subunits; these bridges are implicated in subunit movement. Contacts the tRNAs in the A and P-sites. The protein is Small ribosomal subunit protein uS13 of Methylorubrum populi (strain ATCC BAA-705 / NCIMB 13946 / BJ001) (Methylobacterium populi).